Consider the following 1240-residue polypeptide: Neurofascin (1240 aa).

The signal sequence occupies residues 1–24; it reads MARQQAPPWVHIALILFLLSLGGA. The Extracellular portion of the chain corresponds to 25–1110; that stretch reads IEIPMDPSIQ…NQADIATQGW (1086 aa). Ig-like C2-type domains follow at residues 41–137, 143–230, 244–332, 337–424, 430–517, and 521–603; these read PTIT…LQVS, PKEN…NPFT, PSFM…ISVR, PYWL…AFVS, PRML…VRLE, and PTRI…QDLA. Intrachain disulfides connect C63/C118, C162/C213, C268/C316, and C358/C408. An N-linked (GlcNAc...) asparagine glycan is attached at N305. N-linked (GlcNAc...) asparagine glycans are attached at residues N409 and N446. 2 cysteine pairs are disulfide-bonded: C452-C501 and C543-C592. A Phosphotyrosine modification is found at Y481. A glycan (N-linked (GlcNAc...) asparagine) is linked at N483. S485 is subject to Phosphoserine. Fibronectin type-III domains lie at 630-725, 727-823, 827-923, and 1007-1099; these read RPRD…TSGA, PESN…SGED, APRR…PNEA, and APDE…TAYT. Residues 710–740 form a disordered region; that stretch reads SSHPSLPSERYRTSGAPPESNPSDVKGEGTR. 4 N-linked (GlcNAc...) asparagine glycosylation sites follow: N752, N778, N866, and N881. The segment at 902–942 is disordered; it reads ARTQVGSGEAATEESPAPPNEATPTAAPPTLPPTTVGTTGL. The segment covering 907 to 916 has biased composition (low complexity); that stretch reads GSGEAATEES. Residues 917-933 are compositionally biased toward pro residues; sequence PAPPNEATPTAAPPTLP. A helical transmembrane segment spans residues 1111–1131; it reads FIGLMCAIALLVLILLIVCFI. Residues 1132-1240 are Cytoplasmic-facing; sequence KRSRGGKYPV…SPVNAIYSLA (109 aa). The tract at residues 1141 to 1240 is disordered; that stretch reads VREKKDVPLG…SPVNAIYSLA (100 aa). The segment covering 1154-1165 has biased composition (acidic residues); the sequence is PKEEDGSFDYSD. 7 positions are modified to phosphoserine: S1160, S1174, S1187, S1190, S1226, S1227, and S1231. Over residues 1171–1184 the composition is skewed to polar residues; that stretch reads LQGSQTSLDGTIKQ.

It belongs to the immunoglobulin superfamily. L1/neurofascin/NgCAM family. Horseshoe-shaped homodimer. Probable constituent of a NFASC/NRCAM/ankyrin-G complex. Associates with the sodium channel beta-1 (SCN1B) and beta-3 (SCN3B) subunits. Interacts with GLDN/gliomedin. Interacts with MYOC.

The protein resides in the cell membrane. Its function is as follows. Cell adhesion, ankyrin-binding protein which may be involved in neurite extension, axonal guidance, synaptogenesis, myelination and neuron-glial cell interactions. This Mus musculus (Mouse) protein is Neurofascin (Nfasc).